The chain runs to 275 residues: Protein unc-50 homolog (275 aa).

Residues 1 to 26 are compositionally biased toward polar residues; it reads MTQYSHVKYTQSPTPSVVSGYSSASR. Residues 1–39 form a disordered region; the sequence is MTQYSHVKYTQSPTPSVVSGYSSASRLHSPLPPPANHRR. Over 1–99 the chain is Cytoplasmic; it reads MTQYSHVKYT…TKSQFARDDP (99 aa). Residues 100–120 traverse the membrane as a helical segment; the sequence is AFLVLLVVCLCVTSLGFAYVL. Topologically, residues 121–129 are lumenal; it reads GLSFWQSIS. A helical membrane pass occupies residues 130 to 150; sequence FIFYVVFVDCIFVGIIIASFF. Topologically, residues 151–178 are cytoplasmic; the sequence is WAVTNRYLRTNSLEPDIEWGYAFDVHLN. Residues 179 to 199 traverse the membrane as a helical segment; sequence AFFPPLMLLHFIQLFFYNWLI. The Lumenal segment spans residues 200 to 207; that stretch reads SQTWFISR. Residues 208 to 228 form a helical membrane-spanning segment; it reads FLGNTFWLMGMGYYVYITFLG. The Cytoplasmic segment spans residues 229 to 239; it reads YNCIPHLKNTR. Residues 240–260 form a helical membrane-spanning segment; sequence IILIALPIIFLLFLVVTIIGW. Residues 261–275 lie on the Lumenal side of the membrane; the sequence is NATISFVNFYKYRVY.

This sequence belongs to the unc-50 family.

Its subcellular location is the golgi apparatus membrane. Functionally, required for cell surface expression of acetylcholine receptors. The polypeptide is Protein unc-50 homolog (Drosophila melanogaster (Fruit fly)).